A 102-amino-acid chain; its full sequence is MQKARIKLSSTQHVELDGVCDQIKAIAEKTGVDMAGPIPLPTKALKVTTRKSTDGEGSSSFDRWTMRVHKRVIDIEADERTMKHIMKVRIPDTVQIEIELRN.

This sequence belongs to the universal ribosomal protein uS10 family. Part of the 30S ribosomal subunit.

Functionally, involved in the binding of tRNA to the ribosomes. In Methanococcus maripaludis (strain C6 / ATCC BAA-1332), this protein is Small ribosomal subunit protein uS10.